A 1220-amino-acid chain; its full sequence is DNA-directed RNA polymerase subunit beta' (1220 aa).

Zn(2+) is bound by residues cysteine 60, cysteine 62, cysteine 75, and cysteine 78. 3 residues coordinate Mg(2+): aspartate 449, aspartate 451, and aspartate 453. Positions 818, 892, 899, and 902 each coordinate Zn(2+).

It belongs to the RNA polymerase beta' chain family. The RNAP catalytic core consists of 2 alpha, 1 beta, 1 beta' and 1 omega subunit. When a sigma factor is associated with the core the holoenzyme is formed, which can initiate transcription. Mg(2+) serves as cofactor. It depends on Zn(2+) as a cofactor.

It carries out the reaction RNA(n) + a ribonucleoside 5'-triphosphate = RNA(n+1) + diphosphate. DNA-dependent RNA polymerase catalyzes the transcription of DNA into RNA using the four ribonucleoside triphosphates as substrates. This is DNA-directed RNA polymerase subunit beta' from Lacticaseibacillus paracasei (strain ATCC 334 / BCRC 17002 / CCUG 31169 / CIP 107868 / KCTC 3260 / NRRL B-441) (Lactobacillus paracasei).